A 126-amino-acid chain; its full sequence is Large ribosomal subunit protein bL12 (126 aa).

Belongs to the bacterial ribosomal protein bL12 family. In terms of assembly, homodimer. Part of the ribosomal stalk of the 50S ribosomal subunit. Forms a multimeric L10(L12)X complex, where L10 forms an elongated spine to which 2 to 4 L12 dimers bind in a sequential fashion. Binds GTP-bound translation factors.

Functionally, forms part of the ribosomal stalk which helps the ribosome interact with GTP-bound translation factors. Is thus essential for accurate translation. The chain is Large ribosomal subunit protein bL12 from Saccharophagus degradans (strain 2-40 / ATCC 43961 / DSM 17024).